A 249-amino-acid chain; its full sequence is Putative S-adenosyl-L-methionine-dependent methyltransferase Mkms_0592 (249 aa).

Residues D111 and 141–142 (DL) contribute to the S-adenosyl-L-methionine site.

This sequence belongs to the UPF0677 family.

Its function is as follows. Exhibits S-adenosyl-L-methionine-dependent methyltransferase activity. In Mycobacterium sp. (strain KMS), this protein is Putative S-adenosyl-L-methionine-dependent methyltransferase Mkms_0592.